Reading from the N-terminus, the 486-residue chain is Elastin-binding protein EbpS (486 aa).

The segment covering 1–40 (MSNNFKDDFEKNRQSIDTNSHQDHTEDVEKDQSELEHQDT) has biased composition (basic and acidic residues). Residues 1 to 314 (MSNNFKDDFE…HHDRDKERKK (314 aa)) are disordered. Residues 2-204 (SNNFKDDFEK…ESKDHHSGKK (203 aa)) are Extracellular-facing. The elastin-binding stretch occupies residues 14–34 (QSIDTNSHQDHTEDVEKDQSE). Over residues 64 to 85 (TNHNKQVHNESQTSEDNVQNEA) the composition is skewed to polar residues. Composition is skewed to basic and acidic residues over residues 103-117 (EPSH…EEGY), 126-160 (DKSH…KSEA), and 180-199 (SKDK…SKDH). The span at 204–225 (KGAAIGAGTAGVAGAAGAMGVS) shows a compositional bias: low complexity. Residues 205–225 (GAAIGAGTAGVAGAAGAMGVS) form a helical membrane-spanning segment. The Cytoplasmic segment spans residues 226 to 319 (KAKKHSNDAQ…KERKKGGMAK (94 aa)). Positions 233–246 (DAQNKSNSGKVNNS) are enriched in polar residues. The segment covering 247–259 (TEDKASEDKSKEH) has biased composition (basic and acidic residues). Residues 278–297 (GAASNSASAASKPHASNNAS) are compositionally biased toward low complexity. A compositionally biased stretch (basic and acidic residues) spans 300–314 (NDEHDHHDRDKERKK). The chain crosses the membrane as a helical span at residues 320–340 (VLLPLIAAVLIIGALAIFGGM). Residues 341–486 (ALNNHNNGTK…IRNGQQIVIP (146 aa)) are Extracellular-facing. The disordered stretch occupies residues 351 to 440 (ENKIANTNKN…QRQGGGQRHT (90 aa)). Residues 361 to 398 (NADESKDKDTSKDASKDKSKSTDSDKSKDDQDKATKDE) are compositionally biased toward basic and acidic residues. Low complexity predominate over residues 403–431 (QNNANQANNQAQNNQNQQQANQNQQQQQQ). Positions 437-485 (QRHTVNGQENLYRIAIQYYGSGSPENVEKIRRANGLSGNNIRNGQQIVI) constitute a LysM domain.

It localises to the cell membrane. Promotes binding of soluble elastin peptides and tropoelastin to S.aureus cells although it is not able to promote bacterial adherence to immobilized elastin and, therefore, is not a microbial surface component recognizing adhesive matrix molecule (MSCRAMM). The chain is Elastin-binding protein EbpS (ebpS) from Staphylococcus aureus (strain MRSA252).